Consider the following 556-residue polypeptide: Formate--tetrahydrofolate ligase (556 aa).

65 to 72 (TPAGEGKT) lines the ATP pocket.

The protein belongs to the formate--tetrahydrofolate ligase family.

The enzyme catalyses (6S)-5,6,7,8-tetrahydrofolate + formate + ATP = (6R)-10-formyltetrahydrofolate + ADP + phosphate. The protein operates within one-carbon metabolism; tetrahydrofolate interconversion. This is Formate--tetrahydrofolate ligase from Peptoclostridium acidaminophilum (Eubacterium acidaminophilum).